The sequence spans 92 residues: Large ribosomal subunit protein uL23c (92 aa).

This sequence belongs to the universal ribosomal protein uL23 family. As to quaternary structure, part of the 50S ribosomal subunit.

The protein localises to the plastid. It localises to the chloroplast. In terms of biological role, binds to 23S rRNA. This Nephroselmis olivacea (Green alga) protein is Large ribosomal subunit protein uL23c (rpl23).